A 193-amino-acid polypeptide reads, in one-letter code: MAKLYFYYSTMNAGKSTTLLQSSYNYRERDMNTLVYTAAIDDRFGVGKVTSRIGISQDAFLFRSETNLFDEINEHLKKEKVHCVLVDEAQFLSKQQVYQLSDVVDKLKIPVLCYGLRTDFQAELFEGSKYLLAWADQLEELKTICYCGRKANFVLRLNDQGEVIKEGAQIQIGGNDSYLSVCRLHYKEKCGQI.

ATP contacts are provided by residues 9-16 (STMNAGKS) and 87-90 (DEAQ). Catalysis depends on E88, which acts as the Proton acceptor. C145, C147, C182, and H185 together coordinate Zn(2+).

It belongs to the thymidine kinase family. As to quaternary structure, homotetramer.

It is found in the cytoplasm. The enzyme catalyses thymidine + ATP = dTMP + ADP + H(+). This is Thymidine kinase from Haemophilus influenzae (strain ATCC 51907 / DSM 11121 / KW20 / Rd).